A 339-amino-acid polypeptide reads, in one-letter code: Transcription factor IIIA (339 aa).

C2H2-type zinc fingers lie at residues F12–H36, F42–H66, C72–H97, Y104–H128, F134–H158, Y161–H187, V190–H212, Y219–H244, and F250–H274. Residues F271–K339 are disordered. The segment covering K299 to P309 has biased composition (basic residues). The span at Q311–D323 shows a compositional bias: polar residues.

Its subcellular location is the nucleus. Involved in ribosomal large subunit biogenesis. Interacts with the internal control region (ICR) of approximately 50 bases within the 5S RNA genes, is required for correct transcription of these genes by RNA polymerase III. Also binds the transcribed 5S RNA's. The sequence is that of Transcription factor IIIA (gtf3a) from Anaxyrus americanus (American toad).